Reading from the N-terminus, the 305-residue chain is GTPase Era (305 aa).

The 168-residue stretch at 9–176 (KSGFISIIGR…LDTLPKYLPE (168 aa)) folds into the Era-type G domain. A G1 region spans residues 17-24 (GRPNVGKS). 17-24 (GRPNVGKS) contacts GTP. The interval 43–47 (QTTRN) is G2. Residues 64–67 (DTPG) form a G3 region. Residues 64 to 68 (DTPGI) and 126 to 129 (NKID) each bind GTP. Residues 126–129 (NKID) are G4. The interval 155–157 (ISA) is G5. In terms of domain architecture, KH type-2 spans 207–286 (TREEIPHSIA…YLELWVKVQK (80 aa)).

The protein belongs to the TRAFAC class TrmE-Era-EngA-EngB-Septin-like GTPase superfamily. Era GTPase family. Monomer.

It is found in the cytoplasm. The protein localises to the cell membrane. Functionally, an essential GTPase that binds both GDP and GTP, with rapid nucleotide exchange. Plays a role in 16S rRNA processing and 30S ribosomal subunit biogenesis and possibly also in cell cycle regulation and energy metabolism. This is GTPase Era from Lysinibacillus sphaericus (strain C3-41).